Here is a 72-residue protein sequence, read N- to C-terminus: Translation initiation factor IF-1 (72 aa).

In terms of domain architecture, S1-like spans 1-72 (MTKEENIEMQ…SKGRIIFRSR (72 aa)).

This sequence belongs to the IF-1 family. In terms of assembly, component of the 30S ribosomal translation pre-initiation complex which assembles on the 30S ribosome in the order IF-2 and IF-3, IF-1 and N-formylmethionyl-tRNA(fMet); mRNA recruitment can occur at any time during PIC assembly.

It localises to the cytoplasm. In terms of biological role, one of the essential components for the initiation of protein synthesis. Stabilizes the binding of IF-2 and IF-3 on the 30S subunit to which N-formylmethionyl-tRNA(fMet) subsequently binds. Helps modulate mRNA selection, yielding the 30S pre-initiation complex (PIC). Upon addition of the 50S ribosomal subunit IF-1, IF-2 and IF-3 are released leaving the mature 70S translation initiation complex. In Wigglesworthia glossinidia brevipalpis, this protein is Translation initiation factor IF-1.